We begin with the raw amino-acid sequence, 303 residues long: Tyrosine recombinase XerC (303 aa).

A Core-binding (CB) domain is found at 1–85; the sequence is MRADLDAFLE…ATRGLYQYLL (85 aa). The Tyr recombinase domain maps to 106–285; sequence KLPRTLDADR…DFQHLASVYD (180 aa). Active-site residues include Arg-146, Lys-170, His-237, Arg-240, and His-263. The active-site O-(3'-phospho-DNA)-tyrosine intermediate is Tyr-272.

It belongs to the 'phage' integrase family. XerC subfamily. As to quaternary structure, forms a cyclic heterotetrameric complex composed of two molecules of XerC and two molecules of XerD.

Its subcellular location is the cytoplasm. Functionally, site-specific tyrosine recombinase, which acts by catalyzing the cutting and rejoining of the recombining DNA molecules. The XerC-XerD complex is essential to convert dimers of the bacterial chromosome into monomers to permit their segregation at cell division. It also contributes to the segregational stability of plasmids. The polypeptide is Tyrosine recombinase XerC (Pseudomonas aeruginosa (strain LESB58)).